The following is a 72-amino-acid chain: Putative snRNP Sm-like protein (72 aa).

A Sm domain is found at 4–72 (RPLDILNNAL…RGDNVVYVSP (69 aa)).

Belongs to the snRNP Sm proteins family.

This chain is Putative snRNP Sm-like protein, found in Methanosarcina barkeri (strain Fusaro / DSM 804).